The sequence spans 435 residues: GTPase Der (435 aa).

EngA-type G domains lie at proline 3 to aspartate 168 and valine 176 to arginine 351. Residues glycine 9 to serine 16, aspartate 56 to tyrosine 60, asparagine 120 to aspartate 123, glycine 182 to serine 189, aspartate 229 to leucine 233, and asparagine 294 to aspartate 297 each bind GTP. One can recognise a KH-like domain in the interval methionine 352–lysine 435.

The protein belongs to the TRAFAC class TrmE-Era-EngA-EngB-Septin-like GTPase superfamily. EngA (Der) GTPase family. Associates with the 50S ribosomal subunit.

GTPase that plays an essential role in the late steps of ribosome biogenesis. The protein is GTPase Der of Chloroherpeton thalassium (strain ATCC 35110 / GB-78).